Here is a 253-residue protein sequence, read N- to C-terminus: DNA repair protein RecO (253 aa).

Belongs to the RecO family.

Functionally, involved in DNA repair and RecF pathway recombination. This is DNA repair protein RecO from Staphylococcus epidermidis (strain ATCC 35984 / DSM 28319 / BCRC 17069 / CCUG 31568 / BM 3577 / RP62A).